The chain runs to 114 residues: DNA-directed RNA polymerase subunit Rpo4 (114 aa).

The protein belongs to the eukaryotic RPB4 RNA polymerase subunit family. Part of the 13-subunit RNA polymerase complex. Forms a stalk with Rpo7 that extends from the main structure. In terms of processing, in purified enzyme appears as 5 forms, each differing by about 200 Da of a covalently bound, negatively charged residue. Not glycosylated.

Its subcellular location is the cytoplasm. It carries out the reaction RNA(n) + a ribonucleoside 5'-triphosphate = RNA(n+1) + diphosphate. DNA-dependent RNA polymerase catalyzes the transcription of DNA into RNA using the four ribonucleoside triphosphates as substrates. This subunit is less well bound than the others. Probably not involved in transcription initiation. This chain is DNA-directed RNA polymerase subunit Rpo4, found in Sulfolobus acidocaldarius (strain ATCC 33909 / DSM 639 / JCM 8929 / NBRC 15157 / NCIMB 11770).